Here is a 497-residue protein sequence, read N- to C-terminus: Probable cytosol aminopeptidase (497 aa).

Positions 267 and 272 each coordinate Mn(2+). The active site involves K279. Residues D290, D349, and E351 each coordinate Mn(2+). R353 is an active-site residue.

It belongs to the peptidase M17 family. Requires Mn(2+) as cofactor.

The protein localises to the cytoplasm. It catalyses the reaction Release of an N-terminal amino acid, Xaa-|-Yaa-, in which Xaa is preferably Leu, but may be other amino acids including Pro although not Arg or Lys, and Yaa may be Pro. Amino acid amides and methyl esters are also readily hydrolyzed, but rates on arylamides are exceedingly low.. The catalysed reaction is Release of an N-terminal amino acid, preferentially leucine, but not glutamic or aspartic acids.. Functionally, presumably involved in the processing and regular turnover of intracellular proteins. Catalyzes the removal of unsubstituted N-terminal amino acids from various peptides. The protein is Probable cytosol aminopeptidase of Nitrosomonas europaea (strain ATCC 19718 / CIP 103999 / KCTC 2705 / NBRC 14298).